Reading from the N-terminus, the 269-residue chain is MNQMNPAFVMPDVQSTVDTRQIPIQRVGVKAVRHPLTVLTESGDVQPTVGVWNLDVRLPAEQKGTHMSRFVALLEENRAPLTIERFRAMIASMLEKLEAEAGRIEVTFPYFVNKTAPVSGVQSLLDYEVTLAGESRNGDTRLFLKVLVPVTSLCPCSKKISQYGAHNQRSHVTIDAELAADVPVEALIRIAEEEASCELWGLLKRPDEKFVTERAYENPKFVEDLVRDVAARLDADARIVAYVLEAENFESIHNHSAYALIERDKRHAA.

This sequence belongs to the GTP cyclohydrolase IV family.

The enzyme catalyses GTP + H2O = 7,8-dihydroneopterin 3'-triphosphate + formate + H(+). Its pathway is cofactor biosynthesis; 7,8-dihydroneopterin triphosphate biosynthesis; 7,8-dihydroneopterin triphosphate from GTP: step 1/1. Converts GTP to 7,8-dihydroneopterin triphosphate. The chain is GTP cyclohydrolase FolE2 from Burkholderia multivorans (strain ATCC 17616 / 249).